The following is an 877-amino-acid chain: (E,E)-geranyllinalool synthase (877 aa).

The Mg(2+) site is built by aspartate 540 and aspartate 544. Aspartate 540, aspartate 544, arginine 677, and asparagine 680 together coordinate substrate. A DDXXD motif motif is present at residues 540 to 544; that stretch reads DDFFD. Mg(2+)-binding residues include asparagine 680, serine 684, and glutamate 688.

Belongs to the terpene synthase family. Tpsf subfamily. Mg(2+) serves as cofactor. Mn(2+) is required as a cofactor. Expressed in leaves and flowers.

It is found in the cytoplasm. The enzyme catalyses (2E,6E,10E)-geranylgeranyl diphosphate + H2O = (6E,10E)-geranyllinalool + diphosphate. The protein operates within secondary metabolite biosynthesis; terpenoid biosynthesis. Functionally, involved in the biosynthesis of homoterpenes, attractants of herbivores parasitoids and predators (e.g. predatory mites and parasitoid wasps). Involved in diterpene (C20) biosynthesis. Catalyzes the conversion of geranylgeranyl diphosphate to (E,E)-geranyllinalool, the precursor of the insect-induced volatile C16-homoterpene TMTT. The protein is (E,E)-geranyllinalool synthase of Arabidopsis thaliana (Mouse-ear cress).